A 398-amino-acid polypeptide reads, in one-letter code: MQALVNQTQPINESIRDVDITNFGPTNLIIIQPTSYCNLDCDYCYLPDRHLKNHLPLDLLEPIMQAIFASPFTTSNFSLCWHAGEPLAAGLEFYRQAFAKIETYGEKYNHRQLWFDHSFQSNGILINQAWCDLFKQYPVHVGISLDGPAFLHDKHRKTRTGRGSHAATMRGIEWLQKNDICHSVIAVLTEESLDYPDEIFHFFRDHNLLDVGFNMEETEGINTESSLNKQGTLQKYRQFLERFWQLTSTSEPEFRVREFECLCNLIYTEDRLDHTDMNRPFAIVSIDHQGNFSTFDPELLAIKTPQYGDFIFGNVLTDSFASICQTEKFQRIYHDMTQGVEKCRQTCDYFGLCGGGAGSNKFWENGSFNSTETLACRFRIQQVAEVVIGALEESLGLA.

The Radical SAM core domain occupies 21 to 253; that stretch reads TNFGPTNLII…WQLTSTSEPE (233 aa). Positions 37, 41, and 44 each coordinate [4Fe-4S] cluster.

Belongs to the radical SAM superfamily. Anaerobic sulfatase-maturating enzyme family. The cofactor is [4Fe-4S] cluster.

This is an uncharacterized protein from Synechocystis sp. (strain ATCC 27184 / PCC 6803 / Kazusa).